We begin with the raw amino-acid sequence, 723 residues long: Probable dipeptidyl-peptidase 5 (723 aa).

The signal sequence occupies residues 1–19 (MAALRWLSAVVAVSTTVLA). Asn79, Asn97, Asn154, Asn255, Asn381, and Asn451 each carry an N-linked (GlcNAc...) asparagine glycan. Ser561 serves as the catalytic Charge relay system. The N-linked (GlcNAc...) asparagine glycan is linked to Asn608. Active-site charge relay system residues include Asp644 and His676.

This sequence belongs to the peptidase S9C family.

Its subcellular location is the secreted. Its function is as follows. Extracellular dipeptidyl-peptidase which removes N-terminal dipeptides sequentially from polypeptides having unsubstituted N-termini. The sequence is that of Probable dipeptidyl-peptidase 5 (dpp5) from Aspergillus terreus (strain NIH 2624 / FGSC A1156).